The sequence spans 373 residues: ORC1-type DNA replication protein 2 (373 aa).

Residues 63–67 (TGKTS), Tyr-205, and Arg-217 each bind ATP.

Belongs to the CDC6/cdc18 family.

Functionally, involved in regulation of DNA replication. In Methanosarcina mazei (strain ATCC BAA-159 / DSM 3647 / Goe1 / Go1 / JCM 11833 / OCM 88) (Methanosarcina frisia), this protein is ORC1-type DNA replication protein 2 (cdc6-2).